We begin with the raw amino-acid sequence, 386 residues long: Nucleosome assembly protein 1-like 4 (386 aa).

The disordered stretch occupies residues M1–D29. A2 is modified (N-acetylalanine). Residues S5, S7, and S12 each carry the phosphoserine modification. Positions N20–D29 are enriched in polar residues. At S49 the chain carries Phosphoserine. Position 51 is a phosphothreonine (T51). Phosphoserine is present on residues S53 and S54. Residue T58 is modified to Phosphothreonine. K105 carries the post-translational modification N6-acetyllysine. At S125 the chain carries Phosphoserine. K146 is subject to N6-acetyllysine. Positions I265 to H271 match the Nuclear localization signal motif. At S304 the chain carries Phosphoserine. Acidic residues predominate over residues A339–E370. The segment at A339–Q386 is disordered.

Belongs to the nucleosome assembly protein (NAP) family. Interacts with core (H2A, H2B, H3, H4) and linker (H1) histones. In terms of processing, polyglutamylated and polyglycylated. These 2 modifications occur exclusively on glutamate residues and result in either polyglutamate or polyglycine chains on the gamma-carboxyl group. Both modifications can coexist on the same protein on adjacent residues, and lowering polyglycylation levels increases polyglutamylation, and reciprocally. Polyglutamylated by TTLL4. Phosphorylated at the G0/G1 boundary but it is not phosphorylated in S-phase. Phosphorylated protein remains in the cytoplasm in a complex with histones during the G0/G1 transition, whereas dephosphorylation triggers its transport into the nucleus at the G1/S-boundary.

It localises to the nucleus. The protein localises to the cytoplasm. In terms of biological role, acts as a histone chaperone in nucleosome assembly. The protein is Nucleosome assembly protein 1-like 4 (NAP1L4) of Bos taurus (Bovine).